The chain runs to 314 residues: Nucleotide-binding protein CE1710 (314 aa).

A disordered region spans residues 1-29 (MNQTPGSTVPETATPVTSPASSPSAPETT). The span at 7-29 (STVPETATPVTSPASSPSAPETT) shows a compositional bias: low complexity. 37–44 (GMSGAGLS) is a binding site for ATP. 88 to 91 (DVRS) lines the GTP pocket.

It belongs to the RapZ-like family.

Its function is as follows. Displays ATPase and GTPase activities. The polypeptide is Nucleotide-binding protein CE1710 (Corynebacterium efficiens (strain DSM 44549 / YS-314 / AJ 12310 / JCM 11189 / NBRC 100395)).